The following is a 307-amino-acid chain: Ribulose bisphosphate carboxylase/oxygenase activase, chloroplastic (307 aa).

The transit peptide at Met1 to Ala46 directs the protein to the chloroplast. Residue Gly73–Thr80 coordinates ATP.

Belongs to the CbxX/CfxQ family. Forms homooligomers. Forms heterohexameric rings with the plastid-encoded Rca subunit consisting of 3 of each nuclear- and plastidial-encoded subunits that alternate in the ring.

Its subcellular location is the plastid. The protein localises to the chloroplast. Its function is as follows. Required for the expression of ribulose 1,5-bisphosphate carboxylase/oxygenase (RuBisCo). ATPase involved in the activation of red-type RuBisCo, which tends to form inactive complexes with its substrate ribulose 1,5-bisphosphate (RuBP). Catalyzes the release of RuBP from inhibited RuBisCo in an ATP-dependent manner. Activation of RuBisCO involves the ATP-dependent carboxylation of the epsilon-amino group of lysine leading to a carbamate structure. The nuclear-encoded subunit plays a more critical role in activase function than the plastidial-encoded subunit. This Cyanidioschyzon merolae (strain NIES-3377 / 10D) (Unicellular red alga) protein is Ribulose bisphosphate carboxylase/oxygenase activase, chloroplastic.